The chain runs to 395 residues: ATP phosphoribosyltransferase regulatory subunit (395 aa).

This sequence belongs to the class-II aminoacyl-tRNA synthetase family. HisZ subfamily. As to quaternary structure, heteromultimer composed of HisG and HisZ subunits.

Its subcellular location is the cytoplasm. The protein operates within amino-acid biosynthesis; L-histidine biosynthesis; L-histidine from 5-phospho-alpha-D-ribose 1-diphosphate: step 1/9. In terms of biological role, required for the first step of histidine biosynthesis. May allow the feedback regulation of ATP phosphoribosyltransferase activity by histidine. The chain is ATP phosphoribosyltransferase regulatory subunit from Pseudomonas savastanoi pv. phaseolicola (strain 1448A / Race 6) (Pseudomonas syringae pv. phaseolicola (strain 1448A / Race 6)).